A 243-amino-acid polypeptide reads, in one-letter code: MYQHIVVLTGAGISAESGLRTFRDQDGLWEEHHIEDVATPEGYAKDAELVERFYNSRWEQLHCGTVMPNAAHLALAKLEAEFSGQLLVVTQNIDDLHERAGSRRLLHMHGELSKGRCPRSRQTFLLREPFGVNNGCTCCIPAQRLRPHVVWFGEMPLGMDRIHDALDNCDLFIAIGTSGTVYPAAGFVDTANHHGAQTVEVNLQSPDRHSQFQYHLTGRAGELVPKLVDTILAGRVIGSDLAE.

The Deacetylase sirtuin-type domain maps to 1-234; it reads MYQHIVVLTG…PKLVDTILAG (234 aa). 10-29 contributes to the NAD(+) binding site; it reads GAGISAESGLRTFRDQDGLW. Residues Y54 and R57 each contribute to the substrate site. 91 to 94 contributes to the NAD(+) binding site; the sequence is QNID. H109 serves as the catalytic Proton acceptor. Residues C117 and C136 each contribute to the Zn(2+) site. NAD(+) contacts are provided by residues 176-178, 202-204, and A220; these read GTS and NLQ.

It belongs to the sirtuin family. Class III subfamily. Zn(2+) serves as cofactor.

It localises to the cytoplasm. It catalyses the reaction N(6)-acetyl-L-lysyl-[protein] + NAD(+) + H2O = 2''-O-acetyl-ADP-D-ribose + nicotinamide + L-lysyl-[protein]. It carries out the reaction N(6)-succinyl-L-lysyl-[protein] + NAD(+) + H2O = 2''-O-succinyl-ADP-D-ribose + nicotinamide + L-lysyl-[protein]. Its function is as follows. NAD-dependent lysine deacetylase and desuccinylase that specifically removes acetyl and succinyl groups on target proteins. Modulates the activities of several proteins which are inactive in their acylated form. In Shewanella oneidensis (strain ATCC 700550 / JCM 31522 / CIP 106686 / LMG 19005 / NCIMB 14063 / MR-1), this protein is NAD-dependent protein deacylase.